Reading from the N-terminus, the 202-residue chain is ER membrane protein complex subunit 7 homolog (202 aa).

The signal sequence occupies residues 1 to 23; sequence MAPIFRSTSLIAFSLFFFFFAST. The helical transmembrane segment at 148–168 threads the bilayer; that stretch reads IVKSPMGLMVGFMVVVVFLMP. A disordered region spans residues 179-202; it reads MKSAQEQMRSQGVPSLTSLLPASR. The span at 182-202 shows a compositional bias: polar residues; sequence AQEQMRSQGVPSLTSLLPASR.

The protein belongs to the EMC7 family.

It is found in the membrane. This chain is ER membrane protein complex subunit 7 homolog, found in Arabidopsis thaliana (Mouse-ear cress).